The sequence spans 182 residues: Testis-expressed protein 29 (182 aa).

Over 1-56 (MRYTTDIKKSPPQLLKTFAVCDISLYDICDYNVTRDQCKELGCCFYKGVCYKKVVP) the chain is Extracellular. The chain crosses the membrane as a helical span at residues 57 to 77 (IYVQMFSTLIVLVTGIIIITI). Residues 78–182 (IYRIVQEIKR…PPTDPSENPP (105 aa)) are Cytoplasmic-facing. The interval 91–182 (LSMNSTPKAS…PPTDPSENPP (92 aa)) is disordered. Low complexity predominate over residues 115–170 (RAPSRSPSRTSSTLSSRSPTTAPTTAPTTDPATDPATDPATDPATDPATDPATDPA). Pro residues predominate over residues 171-182 (TAPPTDPSENPP).

Its subcellular location is the membrane. The protein is Testis-expressed protein 29 (Tex29) of Rattus norvegicus (Rat).